Here is a 1885-residue protein sequence, read N- to C-terminus: Fatty acid synthase subunit alpha (1885 aa).

Residues Pro-92–Glu-107 are compositionally biased toward basic and acidic residues. Residues Pro-92–Ser-140 form a disordered region. Low complexity predominate over residues Ser-108 to Pro-126. Positions Val-146–Gln-221 constitute a Carrier domain. Ser-181 carries the post-translational modification O-(pantetheine 4'-phosphoryl)serine. Positions Ile-1121–His-1661 constitute a Ketosynthase family 3 (KS3) domain. Catalysis depends on for beta-ketoacyl synthase activity residues Cys-1304, His-1546, and His-1587. Residues Asp-1771, Val-1772, and Glu-1773 each coordinate Mg(2+). Acetyl-CoA is bound by residues Asp-1771–Glu-1773, Tyr-1797, Ser-1807, Glu-1816–Ser-1826, Arg-1840–Asn-1843, and Ile-1870–His-1872. Mg(2+) contacts are provided by Ser-1871 and His-1872.

The protein belongs to the thiolase-like superfamily. Fungal fatty acid synthetase subunit alpha family. [Alpha(6)beta(6)] hexamers of two multifunctional subunits (alpha and beta).

It carries out the reaction acetyl-CoA + n malonyl-CoA + 2n NADPH + 4n H(+) = a long-chain-acyl-CoA + n CoA + n CO2 + 2n NADP(+).. The enzyme catalyses a fatty acyl-[ACP] + malonyl-[ACP] + H(+) = a 3-oxoacyl-[ACP] + holo-[ACP] + CO2. It catalyses the reaction a (3R)-hydroxyacyl-[ACP] + NADP(+) = a 3-oxoacyl-[ACP] + NADPH + H(+). Functionally, fatty acid synthetase catalyzes the formation of long-chain fatty acids from acetyl-CoA, malonyl-CoA and NADPH. The alpha subunit contains domains for: acyl carrier protein, 3-oxoacyl-[acyl-carrier-protein] reductase, and 3-oxoacyl-[acyl-carrier-protein] synthase. The polypeptide is Fatty acid synthase subunit alpha (FAS2) (Candida albicans (Yeast)).